A 998-amino-acid polypeptide reads, in one-letter code: Collagen alpha-1(I) chain (998 aa).

Residues 1–998 (SYGYDEKGGV…GPPGPPGPPG (998 aa)) form a disordered region. The segment covering 9–22 (GVSVPGPMGPSGPR) has biased composition (low complexity). Pro-25, Pro-28, Pro-30, Pro-39, Pro-42, Pro-45, Pro-59, Pro-74, Pro-80, Pro-89, and Pro-95 each carry 4-hydroxyproline. The span at 62–76 (NGDDGEAGKPGRPGE) shows a compositional bias: basic and acidic residues. At Lys-98 the chain carries 5-hydroxylysine; alternate. Lys-98 carries O-linked (Gal...) hydroxylysine; alternate glycosylation. Ser-104 carries the post-translational modification Phosphoserine. The segment covering 112–128 (DAGPAGPKGEPGSPGEN) has biased composition (low complexity). 16 positions are modified to 4-hydroxyproline: Pro-122, Pro-125, Pro-131, Pro-140, Pro-146, Pro-167, Pro-176, Pro-179, Pro-206, Pro-209, Pro-221, Pro-227, Pro-236, Pro-242, Pro-245, and Pro-260. A compositionally biased stretch (low complexity) spans 146–164 (PGASGPAGARGNDGATGAA). A compositionally biased stretch (pro residues) spans 166–178 (PPGPTGPAGPPGF). Residues 212–251 (AGAAGPAGNPGADGQPGAKGANGAPGIAGAPGFPGARGPS) are compositionally biased toward low complexity. A 5-hydroxylysine modification is found at Lys-263. 4-hydroxyproline occurs at positions 269, 272, 284, 293, 308, 314, 323, and 329. Residues 318–327 (GERGGPGSRG) are compositionally biased toward gly residues. Lys-338 is modified (5-hydroxylysine). 4-hydroxyproline occurs at positions 347, 356, 362, 368, 377, 380, 389, 398, 404, 416, 425, 434, 437, 455, 472, 478, 484, 490, 496, 502, 514, 523, 537, 543, and 552. Residues 371–397 (KGLTGSPGSPGPDGKTGPPGPAGQDGR) show a composition bias toward low complexity. The span at 406-425 (ARGQAGVMGFPGPKGAAGEP) shows a compositional bias: low complexity. A compositionally biased stretch (low complexity) spans 484 to 493 (PGEAGKPGEQ). At Lys-564 the chain carries 5-hydroxylysine. Residues Pro-570, Pro-585, and Pro-591 each carry the 4-hydroxyproline modification. A compositionally biased stretch (low complexity) spans 597–611 (SGPSGPAGPTGARGA). Position 600 is a phosphoserine (Ser-600). Residues Pro-612, Pro-618, Pro-621, Pro-630, Pro-636, Pro-654, Pro-663, and Pro-672 each carry the 4-hydroxyproline modification. Over residues 624-651 (AGFAGPPGADGQPGAKGEPGDAGAKGDA) the composition is skewed to low complexity. Over residues 653 to 665 (PPGPAGPTGPPGP) the composition is skewed to pro residues. Lys-675 bears the 5-hydroxylysine mark. A compositionally biased stretch (low complexity) spans 680–696 (SAGPPGATGFPGAAGRV). Residues Pro-684 and Pro-690 each carry the 4-hydroxyproline modification. A 3-hydroxyproline modification is found at Pro-698. Residues Pro-699, Pro-708, Pro-711, Pro-732, Pro-741, Pro-749, Pro-758, Pro-776, Pro-785, Pro-788, Pro-794, Pro-809, Pro-815, Pro-821, Pro-830, and Pro-836 each carry the 4-hydroxyproline modification. Over residues 725–734 (ETGPAGRPGE) the composition is skewed to low complexity. Positions 746-758 (KGSPGADGPAGAP) are enriched in low complexity. A compositionally biased stretch (pro residues) spans 808 to 818 (PPGPMGPPGLA). Lys-845 bears the 5-hydroxylysine mark. The span at 853–868 (PGPPGAPGAPGAPGPV) shows a compositional bias: pro residues. 4-hydroxyproline occurs at positions 856, 859, and 862. Residues 889-903 (AGPAGARGPAGPQGP) are compositionally biased toward low complexity. Over residues 904-918 (RGDKGETGEQGDRGI) the composition is skewed to basic and acidic residues. At Lys-907 the chain carries 5-hydroxylysine. Lys-919 carries the 5-hydroxylysine; alternate modification. Residue Lys-919 is glycosylated (O-linked (Gal...) hydroxylysine; alternate). Pro-934, Pro-937, Pro-955, and Pro-970 each carry 4-hydroxyproline. The span at 937–970 (PGEQGPSGASGPAGPRGPPGSAGSPGKDGLNGLP) shows a compositional bias: low complexity. Position 975 is a 3-hydroxyproline (Pro-975). At Pro-976 the chain carries 4-hydroxyproline. Over residues 988-998 (VGPPGPPGPPG) the composition is skewed to pro residues. Pro-990 is subject to 3-hydroxyproline. At Pro-991 the chain carries 4-hydroxyproline. Pro-993 carries the post-translational modification 3-hydroxyproline. Residue Pro-994 is modified to 4-hydroxyproline. 3-hydroxyproline is present on Pro-996. At Pro-997 the chain carries 4-hydroxyproline.

The protein belongs to the fibrillar collagen family. As to quaternary structure, trimers of one alpha 2(I) and two alpha 1(I) chains. In terms of processing, contains mostly 4-hydroxyproline. Proline residues at the third position of the tripeptide repeating unit (G-X-Y) are hydroxylated in some or all of the chains. Post-translationally, contains 3-hydroxyproline at a few sites. This modification occurs on the first proline residue in the sequence motif Gly-Pro-Hyp, where Hyp is 4-hydroxyproline. Lysine residues at the third position of the tripeptide repeating unit (G-X-Y) are 5-hydroxylated in some or all of the chains. In terms of processing, O-glycosylated on hydroxylated lysine residues. The O-linked glycan consists of a Glc-Gal disaccharide. In terms of tissue distribution, expressed in bones.

It is found in the secreted. The protein resides in the extracellular space. The protein localises to the extracellular matrix. Its function is as follows. Type I collagen is a member of group I collagen (fibrillar forming collagen). The protein is Collagen alpha-1(I) chain of Nothrotheriops shastensis (Shasta ground sloth).